Here is a 204-residue protein sequence, read N- to C-terminus: N-(5'-phosphoribosyl)anthranilate isomerase (204 aa).

Belongs to the TrpF family.

The enzyme catalyses N-(5-phospho-beta-D-ribosyl)anthranilate = 1-(2-carboxyphenylamino)-1-deoxy-D-ribulose 5-phosphate. It functions in the pathway amino-acid biosynthesis; L-tryptophan biosynthesis; L-tryptophan from chorismate: step 3/5. This chain is N-(5'-phosphoribosyl)anthranilate isomerase, found in Geobacter sp. (strain M21).